The primary structure comprises 182 residues: uncharacterized protein (182 aa).

BNR repeat units follow at residues 58-69 (WISFDAGENWET) and 102-113 (YITDDRGESWRA).

This is an uncharacterized protein from Saccharomyces cerevisiae (strain ATCC 204508 / S288c) (Baker's yeast).